Reading from the N-terminus, the 201-residue chain is Cell division protein SepF (201 aa).

Over residues 27-38 (VQERTSVQRDSR) the composition is skewed to basic and acidic residues. The segment at 27-99 (VQERTSVQRD…PRVQNKDSVR (73 aa)) is disordered. Over residues 43–54 (QEASQRSHMTNS) the composition is skewed to polar residues. Residues 72–81 (NRQERQRVQR) show a composition bias toward basic and acidic residues. Residues 83–92 (NAYQQATPRV) are compositionally biased toward polar residues.

The protein belongs to the SepF family. Homodimer. Interacts with FtsZ.

The protein resides in the cytoplasm. In terms of biological role, cell division protein that is part of the divisome complex and is recruited early to the Z-ring. Probably stimulates Z-ring formation, perhaps through the cross-linking of FtsZ protofilaments. Its function overlaps with FtsA. The protein is Cell division protein SepF of Streptococcus agalactiae serotype Ia (strain ATCC 27591 / A909 / CDC SS700).